Consider the following 284-residue polypeptide: 2-dehydro-3-deoxyphosphooctonate aldolase (284 aa).

It belongs to the KdsA family.

It localises to the cytoplasm. The catalysed reaction is D-arabinose 5-phosphate + phosphoenolpyruvate + H2O = 3-deoxy-alpha-D-manno-2-octulosonate-8-phosphate + phosphate. Its pathway is carbohydrate biosynthesis; 3-deoxy-D-manno-octulosonate biosynthesis; 3-deoxy-D-manno-octulosonate from D-ribulose 5-phosphate: step 2/3. It functions in the pathway bacterial outer membrane biogenesis; lipopolysaccharide biosynthesis. This chain is 2-dehydro-3-deoxyphosphooctonate aldolase, found in Yersinia enterocolitica serotype O:8 / biotype 1B (strain NCTC 13174 / 8081).